The following is an 89-amino-acid chain: Putative defensin-like protein 89 (89 aa).

The signal sequence occupies residues 1-25; the sequence is MGFKNNLSLVSVMVFALILLPMISG. Cystine bridges form between Cys30–Cys66, Cys36–Cys57, Cys42–Cys64, and Cys46–Cys65.

It belongs to the DEFL family.

Its subcellular location is the secreted. The sequence is that of Putative defensin-like protein 89 from Arabidopsis thaliana (Mouse-ear cress).